A 174-amino-acid chain; its full sequence is Vimentin-type intermediate filament-associated coiled-coil protein (174 aa).

Residues 7 to 97 (LQIREANAHL…DQRDQMIQQL (91 aa)) are a coiled coil. Residues 128–174 (GPLPASHSHRAQLLPDGPGPPLGNNMGKEEGQDDQDDQQPAVFGTTV) form a disordered region.

The protein localises to the cytoplasm. The chain is Vimentin-type intermediate filament-associated coiled-coil protein (Vmac) from Mus musculus (Mouse).